The sequence spans 116 residues: Large ribosomal subunit protein uL18 (116 aa).

This sequence belongs to the universal ribosomal protein uL18 family. In terms of assembly, part of the 50S ribosomal subunit; part of the 5S rRNA/L5/L18/L25 subcomplex. Contacts the 5S and 23S rRNAs.

This is one of the proteins that bind and probably mediate the attachment of the 5S RNA into the large ribosomal subunit, where it forms part of the central protuberance. In Hahella chejuensis (strain KCTC 2396), this protein is Large ribosomal subunit protein uL18.